Reading from the N-terminus, the 240-residue chain is ATP-dependent dethiobiotin synthetase BioD (240 aa).

An ATP-binding site is contributed by 15 to 20 (EIGKTF). Thr19 is a Mg(2+) binding site. Lys40 is an active-site residue. ATP contacts are provided by residues Asp57, 118–121 (EGVG), and 178–179 (NR). 2 residues coordinate Mg(2+): Asp57 and Glu118.

Belongs to the dethiobiotin synthetase family. Homodimer. Requires Mg(2+) as cofactor.

It is found in the cytoplasm. It catalyses the reaction (7R,8S)-7,8-diammoniononanoate + CO2 + ATP = (4R,5S)-dethiobiotin + ADP + phosphate + 3 H(+). Its pathway is cofactor biosynthesis; biotin biosynthesis; biotin from 7,8-diaminononanoate: step 1/2. Catalyzes a mechanistically unusual reaction, the ATP-dependent insertion of CO2 between the N7 and N8 nitrogen atoms of 7,8-diaminopelargonic acid (DAPA, also called 7,8-diammoniononanoate) to form a ureido ring. This is ATP-dependent dethiobiotin synthetase BioD from Burkholderia thailandensis (strain ATCC 700388 / DSM 13276 / CCUG 48851 / CIP 106301 / E264).